A 164-amino-acid polypeptide reads, in one-letter code: Ribosome maturation factor RimM (164 aa).

Residues 90-161 (EGRYYVADII…EIIIKPVKTW (72 aa)) enclose the PRC barrel domain.

Belongs to the RimM family. Binds ribosomal protein uS19.

The protein resides in the cytoplasm. In terms of biological role, an accessory protein needed during the final step in the assembly of 30S ribosomal subunit, possibly for assembly of the head region. Essential for efficient processing of 16S rRNA. May be needed both before and after RbfA during the maturation of 16S rRNA. It has affinity for free ribosomal 30S subunits but not for 70S ribosomes. In Clostridium tetani (strain Massachusetts / E88), this protein is Ribosome maturation factor RimM.